The sequence spans 107 residues: ATP-dependent Clp protease adapter protein ClpS (107 aa).

A compositionally biased stretch (basic and acidic residues) spans 1 to 12 (MSGDKDFDKDSD). The tract at residues 1–21 (MSGDKDFDKDSDVTVITRTTP) is disordered.

Belongs to the ClpS family. In terms of assembly, binds to the N-terminal domain of the chaperone ClpA.

In terms of biological role, involved in the modulation of the specificity of the ClpAP-mediated ATP-dependent protein degradation. The sequence is that of ATP-dependent Clp protease adapter protein ClpS from Zymomonas mobilis subsp. mobilis (strain ATCC 31821 / ZM4 / CP4).